The following is a 1439-amino-acid chain: Gag-Pol polyprotein (1439 aa).

Residue Gly2 is the site of N-myristoyl glycine; by host attachment. The tract at residues 7 to 31 (VLSGGELDRWEKIRLRPGGKKKYRL) is interaction with Gp41. The interval 8 to 43 (LSGGELDRWEKIRLRPGGKKKYRLKHIVWASRELER) is interaction with host CALM1. Positions 12–19 (ELDRWEKI) are interaction with host AP3D1. Residues 14 to 33 (DRWEKIRLRPGGKKKYRLKH) form an interaction with membrane phosphatidylinositol 4,5-bisphosphate and RNA region. The Nuclear export signal signature appears at 16 to 22 (WEKIRLR). Positions 26 to 32 (KKKYRLK) match the Nuclear localization signal motif. The segment at 73–77 (EELTS) is interaction with membrane phosphatidylinositol 4,5-bisphosphate. Positions 106–128 (EEQTKSMKKAQQAAADTGNSSQV) are disordered. Tyr132 is subject to Phosphotyrosine; by host. Residues 189 to 227 (NTVGGHQAAMQMLKETINEEAAEWDRLHPVHAGPIAPGQ) form an interaction with human PPIA/CYPA and NUP153 region. The segment at 277–363 (YSPVSILDIR…GGPGHKARVL (87 aa)) is dimerization/Multimerization of capsid protein p24. 2 consecutive CCHC-type zinc fingers follow at residues 390–407 (VKCFNCGKEGHIARNCRA) and 411–428 (KGCWKCGKEGHQMKECTE). The segment at 493–497 (PQITL) is dimerization of protease. The Peptidase A2 domain occupies 512–581 (KEALLDTGAD…TPVNIIGRNL (70 aa)). The active-site For protease activity; shared with dimeric partner is the Asp517. 2 dimerization of protease regions span residues 541-547 (GIGGFIK) and 580-592 (NLLTQIGCTLNFP). The Reverse transcriptase domain maps to 635–825 (EGKISKIGPE…PPFLWMGYEL (191 aa)). Residues Asp701, Asp776, and Asp777 each contribute to the Mg(2+) site. The segment at 818–826 (FLWMGYELH) is RT 'primer grip'. Positions 989 to 1005 (WETWWTEYWQATWIPEW) match the Tryptophan repeat motif motif. Positions 1025–1148 (IVGAETFYVD…VDKLVSAGIR (124 aa)) constitute an RNase H type-1 domain. Mg(2+) contacts are provided by Asp1034, Glu1069, Asp1089, and Asp1140. Residues 1154 to 1195 (DGIDKAQEDHEKYHSNWRAMASDFNLPPIVAKEIVASCDKCQ) form an Integrase-type zinc finger. Residues His1163, His1167, Cys1191, and Cys1194 each coordinate Zn(2+). One can recognise an Integrase catalytic domain in the interval 1205-1355 (VDCSPGIWQL…SAGERIIDII (151 aa)). Mg(2+) is bound by residues Asp1215, Asp1267, and Glu1303. Residues 1374–1421 (FRVYYRDNRDPIWKGPAKLLWKGEGAVVIQDNSDIKVVPRRKVKIIRD) constitute a DNA-binding region (integrase-type).

As to quaternary structure, homotrimer; further assembles as hexamers of trimers. Interacts with gp41 (via C-terminus). Interacts with host CALM1; this interaction induces a conformational change in the Matrix protein, triggering exposure of the myristate group. Interacts with host AP3D1; this interaction allows the polyprotein trafficking to multivesicular bodies during virus assembly. Part of the pre-integration complex (PIC) which is composed of viral genome, matrix protein, Vpr and integrase. In terms of assembly, homodimer; the homodimer further multimerizes as homohexamers or homopentamers. Interacts with human PPIA/CYPA; This interaction stabilizes the capsid. Interacts with human NUP153. Interacts with host PDZD8; this interaction stabilizes the capsid. Interacts with monkey TRIM5; this interaction destabilizes the capsid. Homodimer, whose active site consists of two apposed aspartic acid residues. As to quaternary structure, heterodimer of p66 RT and p51 RT (RT p66/p51). Heterodimerization of RT is essential for DNA polymerase activity. The overall folding of the subdomains is similar in p66 RT and p51 RT but the spatial arrangements of the subdomains are dramatically different. In terms of assembly, homotetramer; may further associate as a homohexadecamer. Part of the pre-integration complex (PIC) which is composed of viral genome, matrix protein, Vpr and integrase. Interacts with human SMARCB1/INI1 and human PSIP1/LEDGF isoform 1. Interacts with human KPNA3; this interaction might play a role in nuclear import of the pre-integration complex. Interacts with human NUP153; this interaction might play a role in nuclear import of the pre-integration complex. Mg(2+) serves as cofactor. Post-translationally, specific enzymatic cleavages by the viral protease yield mature proteins. The protease is released by autocatalytic cleavage. The polyprotein is cleaved during and after budding, this process is termed maturation. Proteolytic cleavage of p66 RT removes the RNase H domain to yield the p51 RT subunit. Nucleocapsid protein p7 might be further cleaved after virus entry. In terms of processing, tyrosine phosphorylated presumably in the virion by a host kinase. Phosphorylation is apparently not a major regulator of membrane association. Phosphorylated possibly by host MAPK1; this phosphorylation is necessary for Pin1-mediated virion uncoating. Post-translationally, methylated by host PRMT6, impairing its function by reducing RNA annealing and the initiation of reverse transcription.

The protein localises to the host cell membrane. Its subcellular location is the host endosome. It localises to the host multivesicular body. It is found in the virion membrane. The protein resides in the host nucleus. The protein localises to the host cytoplasm. Its subcellular location is the virion. The enzyme catalyses Specific for a P1 residue that is hydrophobic, and P1' variable, but often Pro.. It catalyses the reaction Endohydrolysis of RNA in RNA/DNA hybrids. Three different cleavage modes: 1. sequence-specific internal cleavage of RNA. Human immunodeficiency virus type 1 and Moloney murine leukemia virus enzymes prefer to cleave the RNA strand one nucleotide away from the RNA-DNA junction. 2. RNA 5'-end directed cleavage 13-19 nucleotides from the RNA end. 3. DNA 3'-end directed cleavage 15-20 nucleotides away from the primer terminus.. It carries out the reaction 3'-end directed exonucleolytic cleavage of viral RNA-DNA hybrid.. The catalysed reaction is DNA(n) + a 2'-deoxyribonucleoside 5'-triphosphate = DNA(n+1) + diphosphate. Its activity is regulated as follows. Protease: The viral protease is inhibited by many synthetic protease inhibitors (PIs), such as amprenavir, atazanavir, indinavir, loprinavir, nelfinavir, ritonavir and saquinavir. Use of protease inhibitors in tritherapy regimens permit more ambitious therapeutic strategies. Reverse transcriptase/ribonuclease H: RT can be inhibited either by nucleoside RT inhibitors (NRTIs) or by non nucleoside RT inhibitors (NNRTIs). NRTIs act as chain terminators, whereas NNRTIs inhibit DNA polymerization by binding a small hydrophobic pocket near the RT active site and inducing an allosteric change in this region. Classical NRTIs are abacavir, adefovir (PMEA), didanosine (ddI), lamivudine (3TC), stavudine (d4T), tenofovir (PMPA), zalcitabine (ddC), and zidovudine (AZT). Classical NNRTIs are atevirdine (BHAP U-87201E), delavirdine, efavirenz (DMP-266), emivirine (I-EBU), and nevirapine (BI-RG-587). The tritherapies used as a basic effective treatment of AIDS associate two NRTIs and one NNRTI. Mediates, with Gag polyprotein, the essential events in virion assembly, including binding the plasma membrane, making the protein-protein interactions necessary to create spherical particles, recruiting the viral Env proteins, and packaging the genomic RNA via direct interactions with the RNA packaging sequence (Psi). Gag-Pol polyprotein may regulate its own translation, by the binding genomic RNA in the 5'-UTR. At low concentration, the polyprotein would promote translation, whereas at high concentration, the polyprotein would encapsidate genomic RNA and then shut off translation. In terms of biological role, targets the polyprotein to the plasma membrane via a multipartite membrane-binding signal, that includes its myristoylated N-terminus. Matrix protein is part of the pre-integration complex. Implicated in the release from host cell mediated by Vpu. Binds to RNA. Functionally, forms the conical core that encapsulates the genomic RNA-nucleocapsid complex in the virion. Most core are conical, with only 7% tubular. The core is constituted by capsid protein hexamer subunits. The core is disassembled soon after virion entry. Host restriction factors such as TRIM5-alpha or TRIMCyp bind retroviral capsids and cause premature capsid disassembly, leading to blocks in reverse transcription. Capsid restriction by TRIM5 is one of the factors which restricts HIV-1 to the human species. Host PIN1 apparently facilitates the virion uncoating. On the other hand, interactions with PDZD8 or CYPA stabilize the capsid. Its function is as follows. Encapsulates and protects viral dimeric unspliced genomic RNA (gRNA). Binds these RNAs through its zinc fingers. Acts as a nucleic acid chaperone which is involved in rearangement of nucleic acid secondary structure during gRNA retrotranscription. Also facilitates template switch leading to recombination. As part of the polyprotein, participates in gRNA dimerization, packaging, tRNA incorporation and virion assembly. Aspartyl protease that mediates proteolytic cleavages of Gag and Gag-Pol polyproteins during or shortly after the release of the virion from the plasma membrane. Cleavages take place as an ordered, step-wise cascade to yield mature proteins. This process is called maturation. Displays maximal activity during the budding process just prior to particle release from the cell. Also cleaves Nef and Vif, probably concomitantly with viral structural proteins on maturation of virus particles. Hydrolyzes host EIF4GI and PABP1 in order to shut off the capped cellular mRNA translation. The resulting inhibition of cellular protein synthesis serves to ensure maximal viral gene expression and to evade host immune response. Also mediates cleavage of host YTHDF3. Mediates cleavage of host CARD8, thereby activating the CARD8 inflammasome, leading to the clearance of latent HIV-1 in patient CD4(+) T-cells after viral reactivation; in contrast, HIV-1 can evade CARD8-sensing when its protease remains inactive in infected cells prior to viral budding. In terms of biological role, multifunctional enzyme that converts the viral RNA genome into dsDNA in the cytoplasm, shortly after virus entry into the cell. This enzyme displays a DNA polymerase activity that can copy either DNA or RNA templates, and a ribonuclease H (RNase H) activity that cleaves the RNA strand of RNA-DNA heteroduplexes in a partially processive 3' to 5' endonucleasic mode. Conversion of viral genomic RNA into dsDNA requires many steps. A tRNA(3)-Lys binds to the primer-binding site (PBS) situated at the 5'-end of the viral RNA. RT uses the 3' end of the tRNA primer to perform a short round of RNA-dependent minus-strand DNA synthesis. The reading proceeds through the U5 region and ends after the repeated (R) region which is present at both ends of viral RNA. The portion of the RNA-DNA heteroduplex is digested by the RNase H, resulting in a ssDNA product attached to the tRNA primer. This ssDNA/tRNA hybridizes with the identical R region situated at the 3' end of viral RNA. This template exchange, known as minus-strand DNA strong stop transfer, can be either intra- or intermolecular. RT uses the 3' end of this newly synthesized short ssDNA to perform the RNA-dependent minus-strand DNA synthesis of the whole template. RNase H digests the RNA template except for two polypurine tracts (PPTs) situated at the 5'-end and near the center of the genome. It is not clear if both polymerase and RNase H activities are simultaneous. RNase H probably can proceed both in a polymerase-dependent (RNA cut into small fragments by the same RT performing DNA synthesis) and a polymerase-independent mode (cleavage of remaining RNA fragments by free RTs). Secondly, RT performs DNA-directed plus-strand DNA synthesis using the PPTs that have not been removed by RNase H as primers. PPTs and tRNA primers are then removed by RNase H. The 3' and 5' ssDNA PBS regions hybridize to form a circular dsDNA intermediate. Strand displacement synthesis by RT to the PBS and PPT ends produces a blunt ended, linear dsDNA copy of the viral genome that includes long terminal repeats (LTRs) at both ends. Functionally, catalyzes viral DNA integration into the host chromosome, by performing a series of DNA cutting and joining reactions. This enzyme activity takes place after virion entry into a cell and reverse transcription of the RNA genome in dsDNA. The first step in the integration process is 3' processing. This step requires a complex comprising the viral genome, matrix protein, Vpr and integrase. This complex is called the pre-integration complex (PIC). The integrase protein removes 2 nucleotides from each 3' end of the viral DNA, leaving recessed CA OH's at the 3' ends. In the second step, the PIC enters cell nucleus. This process is mediated through integrase and Vpr proteins, and allows the virus to infect a non dividing cell. This ability to enter the nucleus is specific of lentiviruses, other retroviruses cannot and rely on cell division to access cell chromosomes. In the third step, termed strand transfer, the integrase protein joins the previously processed 3' ends to the 5' ends of strands of target cellular DNA at the site of integration. The 5'-ends are produced by integrase-catalyzed staggered cuts, 5 bp apart. A Y-shaped, gapped, recombination intermediate results, with the 5'-ends of the viral DNA strands and the 3' ends of target DNA strands remaining unjoined, flanking a gap of 5 bp. The last step is viral DNA integration into host chromosome. This involves host DNA repair synthesis in which the 5 bp gaps between the unjoined strands are filled in and then ligated. Since this process occurs at both cuts flanking the HIV genome, a 5 bp duplication of host DNA is produced at the ends of HIV-1 integration. Alternatively, Integrase may catalyze the excision of viral DNA just after strand transfer, this is termed disintegration. The sequence is that of Gag-Pol polyprotein (gag-pol) from Human immunodeficiency virus type 1 group M subtype B (isolate JRCSF) (HIV-1).